A 339-amino-acid polypeptide reads, in one-letter code: Phenylalanine--tRNA ligase alpha subunit (339 aa).

Glu-253 contacts Mg(2+).

Belongs to the class-II aminoacyl-tRNA synthetase family. Phe-tRNA synthetase alpha subunit type 1 subfamily. As to quaternary structure, tetramer of two alpha and two beta subunits. It depends on Mg(2+) as a cofactor.

Its subcellular location is the cytoplasm. The catalysed reaction is tRNA(Phe) + L-phenylalanine + ATP = L-phenylalanyl-tRNA(Phe) + AMP + diphosphate + H(+). This Thioalkalivibrio sulfidiphilus (strain HL-EbGR7) protein is Phenylalanine--tRNA ligase alpha subunit.